The following is a 105-amino-acid chain: Thioredoxin-like protein slr0233 (105 aa).

In terms of domain architecture, Thioredoxin spans 1 to 102 (MAVKKQFANF…QAAQLIQQLQ (102 aa)). C30 and C33 form a disulfide bridge.

This sequence belongs to the thioredoxin family.

The chain is Thioredoxin-like protein slr0233 from Synechocystis sp. (strain ATCC 27184 / PCC 6803 / Kazusa).